Consider the following 447-residue polypeptide: tRNA modification GTPase MnmE (447 aa).

(6S)-5-formyl-5,6,7,8-tetrahydrofolate is bound by residues Arg24, Glu81, and Lys120. The TrmE-type G domain occupies 216–371 (GLNVAIAGKP…LRKELSNISG (156 aa)). A K(+)-binding site is contributed by Asn226. GTP is bound by residues 226–231 (NAGKSS), 245–251 (TDIAGTT), and 270–273 (DTAG). A Mg(2+)-binding site is contributed by Ser230. The K(+) site is built by Thr245, Ile247, and Thr250. Position 251 (Thr251) interacts with Mg(2+). Residue Lys447 participates in (6S)-5-formyl-5,6,7,8-tetrahydrofolate binding.

It belongs to the TRAFAC class TrmE-Era-EngA-EngB-Septin-like GTPase superfamily. TrmE GTPase family. As to quaternary structure, homodimer. Heterotetramer of two MnmE and two MnmG subunits. K(+) serves as cofactor.

It is found in the cytoplasm. Exhibits a very high intrinsic GTPase hydrolysis rate. Involved in the addition of a carboxymethylaminomethyl (cmnm) group at the wobble position (U34) of certain tRNAs, forming tRNA-cmnm(5)s(2)U34. The protein is tRNA modification GTPase MnmE of Vesicomyosocius okutanii subsp. Calyptogena okutanii (strain HA).